The following is a 64-amino-acid chain: Large ribosomal subunit protein bL35 (64 aa).

Composition is skewed to basic residues over residues 1 to 26 and 33 to 44; these read MPKM…KRSK and LTKKSPKRKRKL. Residues 1–44 are disordered; it reads MPKMKTHRGAAKRFKKTGTGKIKRSKAYTSHILTKKSPKRKRKL.

This sequence belongs to the bacterial ribosomal protein bL35 family.

The polypeptide is Large ribosomal subunit protein bL35 (Alkaliphilus oremlandii (strain OhILAs) (Clostridium oremlandii (strain OhILAs))).